Reading from the N-terminus, the 310-residue chain is tRNA uridine(34) hydroxylase (310 aa).

Residues 124-218 (SDPEVLLIDT…YFEEVPQEES (95 aa)) form the Rhodanese domain. Cys178 acts as the Cysteine persulfide intermediate in catalysis.

It belongs to the TrhO family.

It catalyses the reaction uridine(34) in tRNA + AH2 + O2 = 5-hydroxyuridine(34) in tRNA + A + H2O. Its function is as follows. Catalyzes oxygen-dependent 5-hydroxyuridine (ho5U) modification at position 34 in tRNAs. This chain is tRNA uridine(34) hydroxylase, found in Pseudomonas putida (strain W619).